The sequence spans 165 residues: Sec-independent protein translocase protein TatB (165 aa).

The chain crosses the membrane as a helical span at residues 1 to 21 (MFDVSFTELIVIGVVALIVLG). Polar residues predominate over residues 67 to 84 (DSTAQDVNQSLRSATDSL). The disordered stretch occupies residues 67-165 (DSTAQDVNQS…PKSPSTGNAT (99 aa)). The span at 127–159 (KLPGTPATLPATAAAEPTPAAPAASQAEAPKSP) shows a compositional bias: low complexity.

It belongs to the TatB family. In terms of assembly, the Tat system comprises two distinct complexes: a TatABC complex, containing multiple copies of TatA, TatB and TatC subunits, and a separate TatA complex, containing only TatA subunits. Substrates initially bind to the TatABC complex, which probably triggers association of the separate TatA complex to form the active translocon.

It is found in the cell inner membrane. In terms of biological role, part of the twin-arginine translocation (Tat) system that transports large folded proteins containing a characteristic twin-arginine motif in their signal peptide across membranes. Together with TatC, TatB is part of a receptor directly interacting with Tat signal peptides. TatB may form an oligomeric binding site that transiently accommodates folded Tat precursor proteins before their translocation. The chain is Sec-independent protein translocase protein TatB from Bordetella avium (strain 197N).